Here is a 445-residue protein sequence, read N- to C-terminus: GTPase Der (445 aa).

EngA-type G domains lie at 3–167 and 180–353; these read PVIA…YAGQ and VKIA…AAAM. GTP contacts are provided by residues 9–16, 56–60, 119–122, 186–193, 233–237, and 298–301; these read GRPNVGKS, DTGGF, NKAE, DTAGL, and NKWD. The KH-like domain occupies 354 to 438; that stretch reads AKLPTPKLTR…PLRIEFRSST (85 aa).

The protein belongs to the TRAFAC class TrmE-Era-EngA-EngB-Septin-like GTPase superfamily. EngA (Der) GTPase family. Associates with the 50S ribosomal subunit.

Functionally, GTPase that plays an essential role in the late steps of ribosome biogenesis. This Paraburkholderia phytofirmans (strain DSM 17436 / LMG 22146 / PsJN) (Burkholderia phytofirmans) protein is GTPase Der.